We begin with the raw amino-acid sequence, 76 residues long: Defensin-like protein 5 (76 aa).

Positions methionine 1 to alanine 29 are cleaved as a signal peptide. Disulfide bonds link cysteine 32–cysteine 76, cysteine 43–cysteine 63, cysteine 49–cysteine 70, and cysteine 53–cysteine 72.

Belongs to the DEFL family.

Its subcellular location is the secreted. In terms of biological role, confers broad-spectrum resistance to pathogens. The protein is Defensin-like protein 5 (PDF2.4) of Arabidopsis thaliana (Mouse-ear cress).